The sequence spans 467 residues: DNA polymerase IV (467 aa).

A UmuC domain is found at 5 to 187; sequence VLHIDMDAFF…LPVGALWGVG (183 aa). Residues aspartate 9 and aspartate 104 each coordinate Mg(2+). Residue glutamate 105 is part of the active site. Disordered regions lie at residues 364-383 and 429-449; these read PDTD…STQV and KGRT…DPLD.

Belongs to the DNA polymerase type-Y family. In terms of assembly, monomer. Requires Mg(2+) as cofactor.

It localises to the cytoplasm. It carries out the reaction DNA(n) + a 2'-deoxyribonucleoside 5'-triphosphate = DNA(n+1) + diphosphate. In terms of biological role, poorly processive, error-prone DNA polymerase involved in untargeted mutagenesis. Copies undamaged DNA at stalled replication forks, which arise in vivo from mismatched or misaligned primer ends. These misaligned primers can be extended by PolIV. Exhibits no 3'-5' exonuclease (proofreading) activity. May be involved in translesional synthesis, in conjunction with the beta clamp from PolIII. This Corynebacterium glutamicum (strain ATCC 13032 / DSM 20300 / JCM 1318 / BCRC 11384 / CCUG 27702 / LMG 3730 / NBRC 12168 / NCIMB 10025 / NRRL B-2784 / 534) protein is DNA polymerase IV.